A 607-amino-acid chain; its full sequence is MVSNKNLLPIIYIFFIILYFGDVAKSQYFPLDKGATCQKYRGDSPGIQLCDGFLSNPNSIYINSTSSQEAIQAQGNLVRQYINFYKSFESCKNPRTFALLCAFLFPECEKYTDPVSKVTYAYPILPCYNNCLNMTTSCQISTSRLSCATKYTFENISYSVFPKNTTTYQIDSLSYTNTCENTDLIANSQNTSIQQCFEPLVYHVSTDEIHDKSIGYIFPSTNTTCVVGCPAPLYYANQWRNIYRLSDVLSILSCILTLFLVITLGIINPKVSRFDKINVMLLSSIFLQAFSGALMTFNGTENTLCPEDGRFASYIDRMCVATGFLLHGSSLLVVQWWCVLSFEVWFTIFQVGKKQKDRFIYYLVASLIIAWIPPIVSISKNEYSGGPANPFCWLTTFNYRRFAFWLPMGIFLCLGGVFLILLMREIYVIVSGNVQSTKESRFKVLKMEAKPIISLIMYFSCLLYLFIYDQWINNHMHVYTDSIPSYALCLLTSTSTNDCLLKAPDITGLGYFIYSIRVFGVYAFIIYGISKKTLQIWKYNYFVVFIGQKIEQFTNATTTAKSSNSNNSSTTNNISVKASSNMEYETRQENENGDSQSVELDSNSDAL.

The first 26 residues, 1–26 (MVSNKNLLPIIYIFFIILYFGDVAKS), serve as a signal peptide directing secretion. Over 27–247 (QYFPLDKGAT…QWRNIYRLSD (221 aa)) the chain is Extracellular. An FZ domain is found at 32 to 182 (DKGATCQKYR…LSYTNTCENT (151 aa)). Intrachain disulfides connect C37-C108, C50-C101, and C127-C179. 6 N-linked (GlcNAc...) asparagine glycosylation sites follow: N63, N133, N155, N164, N190, and N222. A helical transmembrane segment spans residues 248-268 (VLSILSCILTLFLVITLGIIN). Over 269–276 (PKVSRFDK) the chain is Cytoplasmic. The chain crosses the membrane as a helical span at residues 277–297 (INVMLLSSIFLQAFSGALMTF). Residue N298 is glycosylated (N-linked (GlcNAc...) asparagine). Residues 298 to 330 (NGTENTLCPEDGRFASYIDRMCVATGFLLHGSS) lie on the Extracellular side of the membrane. A helical membrane pass occupies residues 331–351 (LLVVQWWCVLSFEVWFTIFQV). Residues 352-358 (GKKQKDR) are Cytoplasmic-facing. A helical transmembrane segment spans residues 359-379 (FIYYLVASLIIAWIPPIVSIS). The Extracellular segment spans residues 380-401 (KNEYSGGPANPFCWLTTFNYRR). A helical transmembrane segment spans residues 402–422 (FAFWLPMGIFLCLGGVFLILL). The Cytoplasmic segment spans residues 423–451 (MREIYVIVSGNVQSTKESRFKVLKMEAKP). A helical membrane pass occupies residues 452–472 (IISLIMYFSCLLYLFIYDQWI). Topologically, residues 473–508 (NNHMHVYTDSIPSYALCLLTSTSTNDCLLKAPDITG) are extracellular. Residues 509-529 (LGYFIYSIRVFGVYAFIIYGI) form a helical membrane-spanning segment. Topologically, residues 530-607 (SKKTLQIWKY…VELDSNSDAL (78 aa)) are cytoplasmic. Positions 532-537 (KTLQIW) match the Lys-Thr-X-X-X-Trp motif, mediates interaction with the PDZ domain of Dvl family members motif. Residues 559 to 575 (TAKSSNSNNSSTTNNIS) show a composition bias toward low complexity. A disordered region spans residues 559 to 607 (TAKSSNSNNSSTTNNISVKASSNMEYETRQENENGDSQSVELDSNSDAL). Residues 593 to 607 (GDSQSVELDSNSDAL) show a composition bias toward polar residues.

The protein belongs to the G-protein coupled receptor Fz/Smo family.

Its subcellular location is the membrane. This chain is Frizzled and smoothened-like protein J (fslJ-1), found in Dictyostelium discoideum (Social amoeba).